A 143-amino-acid polypeptide reads, in one-letter code: FAD synthase (143 aa).

ATP contacts are provided by residues 13–14 (TF), 18–21 (HPGH), and D96.

This sequence belongs to the archaeal FAD synthase family. As to quaternary structure, homodimer. A divalent metal cation serves as cofactor.

It catalyses the reaction FMN + ATP + H(+) = FAD + diphosphate. It participates in cofactor biosynthesis; FAD biosynthesis; FAD from FMN: step 1/1. Catalyzes the transfer of the AMP portion of ATP to flavin mononucleotide (FMN) to produce flavin adenine dinucleotide (FAD) coenzyme. The protein is FAD synthase of Methanothrix thermoacetophila (strain DSM 6194 / JCM 14653 / NBRC 101360 / PT) (Methanosaeta thermophila).